We begin with the raw amino-acid sequence, 373 residues long: Alanine racemase (373 aa).

Lys40 acts as the Proton acceptor; specific for D-alanine in catalysis. An N6-(pyridoxal phosphate)lysine modification is found at Lys40. Position 140 (Arg140) interacts with substrate. Residue Tyr268 is the Proton acceptor; specific for L-alanine of the active site. Met315 serves as a coordination point for substrate.

Belongs to the alanine racemase family. Pyridoxal 5'-phosphate is required as a cofactor.

It catalyses the reaction L-alanine = D-alanine. It participates in amino-acid biosynthesis; D-alanine biosynthesis; D-alanine from L-alanine: step 1/1. In terms of biological role, catalyzes the interconversion of L-alanine and D-alanine. May also act on other amino acids. The protein is Alanine racemase (alr) of Limosilactobacillus fermentum (strain NBRC 3956 / LMG 18251) (Lactobacillus fermentum).